Reading from the N-terminus, the 55-residue chain is MAKPTTIKIRLNSTAGTGHFYVTKKNARTMTEKMTVRKYDPVVRKHVEYKEGKIK.

This sequence belongs to the bacterial ribosomal protein bL33 family.

The sequence is that of Large ribosomal subunit protein bL33 from Ruegeria pomeroyi (strain ATCC 700808 / DSM 15171 / DSS-3) (Silicibacter pomeroyi).